Consider the following 325-residue polypeptide: Elongation factor P--(R)-beta-lysine ligase (325 aa).

76-78 lines the substrate pocket; sequence SPE. Residues 100-102 and Asn109 each bind ATP; that span reads RNE. Position 118 (Tyr118) interacts with substrate. Position 244–245 (244–245) interacts with ATP; sequence EL. Glu251 provides a ligand contact to substrate. Gly300 is an ATP binding site.

The protein belongs to the class-II aminoacyl-tRNA synthetase family. EpmA subfamily. In terms of assembly, homodimer.

The enzyme catalyses D-beta-lysine + L-lysyl-[protein] + ATP = N(6)-((3R)-3,6-diaminohexanoyl)-L-lysyl-[protein] + AMP + diphosphate + H(+). In terms of biological role, with EpmB is involved in the beta-lysylation step of the post-translational modification of translation elongation factor P (EF-P). Catalyzes the ATP-dependent activation of (R)-beta-lysine produced by EpmB, forming a lysyl-adenylate, from which the beta-lysyl moiety is then transferred to the epsilon-amino group of a conserved specific lysine residue in EF-P. The sequence is that of Elongation factor P--(R)-beta-lysine ligase from Klebsiella pneumoniae subsp. pneumoniae (strain ATCC 700721 / MGH 78578).